Consider the following 471-residue polypeptide: Glutamate--tRNA ligase (471 aa).

Residues 9–19 carry the 'HIGH' region motif; sequence PSPTGYLHVGG. Residues Cys-98, Cys-100, Cys-125, and Asp-127 each contribute to the Zn(2+) site. The 'KMSKS' region motif lies at 237-241; sequence KLSKR. Position 240 (Lys-240) interacts with ATP.

The protein belongs to the class-I aminoacyl-tRNA synthetase family. Glutamate--tRNA ligase type 1 subfamily. In terms of assembly, monomer. The cofactor is Zn(2+).

It is found in the cytoplasm. The enzyme catalyses tRNA(Glu) + L-glutamate + ATP = L-glutamyl-tRNA(Glu) + AMP + diphosphate. Its function is as follows. Catalyzes the attachment of glutamate to tRNA(Glu) in a two-step reaction: glutamate is first activated by ATP to form Glu-AMP and then transferred to the acceptor end of tRNA(Glu). This is Glutamate--tRNA ligase from Yersinia pseudotuberculosis serotype O:1b (strain IP 31758).